Reading from the N-terminus, the 233-residue chain is H-2 class II histocompatibility antigen, A-S alpha chain (233 aa).

The tract at residues 1-88 is alpha-1; it reads EDDIEADHVG…KRSNSTPATN (88 aa). Topologically, residues 1–195 are extracellular; that stretch reads EDDIEADHVG…IPAPMSELTE (195 aa). Residues 89 to 182 are alpha-2; the sequence is EAPQATVFPK…GLEEPVLKHW (94 aa). The Ig-like C1-type domain maps to 91–183; it reads PQATVFPKSP…LEEPVLKHWE (93 aa). Cys-111 and Cys-167 are oxidised to a cystine. N-linked (GlcNAc...) asparagine glycosylation occurs at Asn-122. Positions 183 to 195 are connecting peptide; it reads EPEIPAPMSELTE. Residues 196 to 221 traverse the membrane as a helical segment; that stretch reads TVVCALGLSVGLVGIVVGTIFIIQGL. Residues 222-233 lie on the Cytoplasmic side of the membrane; it reads RSGGTSRHPGPL.

Belongs to the MHC class II family.

It is found in the membrane. The polypeptide is H-2 class II histocompatibility antigen, A-S alpha chain (H2-Aa) (Mus musculus (Mouse)).